Here is a 417-residue protein sequence, read N- to C-terminus: Serine hydroxymethyltransferase (417 aa).

(6S)-5,6,7,8-tetrahydrofolate is bound by residues Leu121 and 125–127 (GHL). Lys229 carries the N6-(pyridoxal phosphate)lysine modification. 355–357 (SPF) contributes to the (6S)-5,6,7,8-tetrahydrofolate binding site.

Belongs to the SHMT family. As to quaternary structure, homodimer. Requires pyridoxal 5'-phosphate as cofactor.

It localises to the cytoplasm. It carries out the reaction (6R)-5,10-methylene-5,6,7,8-tetrahydrofolate + glycine + H2O = (6S)-5,6,7,8-tetrahydrofolate + L-serine. The protein operates within one-carbon metabolism; tetrahydrofolate interconversion. Its pathway is amino-acid biosynthesis; glycine biosynthesis; glycine from L-serine: step 1/1. Its function is as follows. Catalyzes the reversible interconversion of serine and glycine with tetrahydrofolate (THF) serving as the one-carbon carrier. This reaction serves as the major source of one-carbon groups required for the biosynthesis of purines, thymidylate, methionine, and other important biomolecules. Also exhibits THF-independent aldolase activity toward beta-hydroxyamino acids, producing glycine and aldehydes, via a retro-aldol mechanism. The polypeptide is Serine hydroxymethyltransferase (Sodalis glossinidius (strain morsitans)).